A 404-amino-acid polypeptide reads, in one-letter code: Cysteine desulfurase IscS (404 aa).

Residues 75 to 76 (AT), Asn155, Gln183, and 203 to 205 (SGH) contribute to the pyridoxal 5'-phosphate site. Lys206 bears the N6-(pyridoxal phosphate)lysine mark. Residue Thr243 coordinates pyridoxal 5'-phosphate. Cys328 (cysteine persulfide intermediate) is an active-site residue. Cys328 lines the [2Fe-2S] cluster pocket.

This sequence belongs to the class-V pyridoxal-phosphate-dependent aminotransferase family. NifS/IscS subfamily. In terms of assembly, homodimer. Forms a heterotetramer with IscU, interacts with other sulfur acceptors. The cofactor is pyridoxal 5'-phosphate.

It localises to the cytoplasm. The enzyme catalyses (sulfur carrier)-H + L-cysteine = (sulfur carrier)-SH + L-alanine. Its pathway is cofactor biosynthesis; iron-sulfur cluster biosynthesis. Functionally, master enzyme that delivers sulfur to a number of partners involved in Fe-S cluster assembly, tRNA modification or cofactor biosynthesis. Catalyzes the removal of elemental sulfur atoms from cysteine to produce alanine. Functions as a sulfur delivery protein for Fe-S cluster synthesis onto IscU, an Fe-S scaffold assembly protein, as well as other S acceptor proteins. In Shewanella sp. (strain MR-4), this protein is Cysteine desulfurase IscS.